Consider the following 220-residue polypeptide: Redox-sensing transcriptional repressor Rex (220 aa).

The H-T-H motif DNA-binding region spans 25-64 (WYLSNVKLLKQRGERFVSSTQISKEINIDASQIAKDLSYV). 99–104 (GVGSLG) is an NAD(+) binding site.

It belongs to the transcriptional regulatory Rex family. In terms of assembly, homodimer.

The protein localises to the cytoplasm. Modulates transcription in response to changes in cellular NADH/NAD(+) redox state. The protein is Redox-sensing transcriptional repressor Rex of Bacteroides thetaiotaomicron (strain ATCC 29148 / DSM 2079 / JCM 5827 / CCUG 10774 / NCTC 10582 / VPI-5482 / E50).